The sequence spans 142 residues: uncharacterized protein (142 aa).

A Peptidase C39 domain is found at 18–137; sequence QSRSYSCGPA…RIFTGNVLVV (120 aa).

This is an uncharacterized protein from Methanothermobacter thermautotrophicus (strain ATCC 29096 / DSM 1053 / JCM 10044 / NBRC 100330 / Delta H) (Methanobacterium thermoautotrophicum).